Consider the following 595-residue polypeptide: MSLFKAYARVLTYLKKEKNTSLLICAANVMLAIITIAEPILFGRVIDSIAEKSAIILTLTIWVCFGISHIIAYVLVARSADRLTHRHRLAVLTESFERIIAMPLSWHQQRGTSNALHILLRAIDSMSAIWLDFMRQHLSTLVALFILIPIAFNMNWRLSIVLVVLAIIYVLIARLVMRKTKDGQAAVECYHHNLFQHVSDSISNVSIVQSYNRIREETSALHNYTNDLLKAQNPVLNWWALASGLNRTASTISIVCVLLLGAFFVAKGQLRVGEVVAFVGFAQLMISRLDQMSNFINLTVSSQAKLQEFFSMEDSTFHINEPENLPCLQNVKGTVQFHHVTYKFPNSSQGVFDISFKVKTGQTVAIVGPTGAGKTTLINLLQRVYEPTFGHISIDGINIRSINRESLRKSLATVFQDAGLFNRSIHDNILIGRATATNEELYEAAKIAAAHDFILKKTDRYNTMVGERGSQLSGGEKQRLAIARAVLKNAPILILDEATSALDVETEARVKDALDCISHNRTTFIIAHRLSTVRHADLVLFLENGHLIEKGNFQELIDKGGRFYKLLKAGGLIIDQPTIKGEDKNVIPLREAIAS.

The ABC transmembrane type-1 domain maps to 21 to 301; it reads SLLICAANVM…MSNFINLTVS (281 aa). The next 5 helical transmembrane spans lie at 22–42, 55–75, 128–148, 152–172, and 248–268; these read LLICAANVMLAIITIAEPILF, IILTLTIWVCFGISHIIAYVL, AIWLDFMRQHLSTLVALFILI, FNMNWRLSIVLVVLAIIYVLI, and TASTISIVCVLLLGAFFVAKG. The ABC transporter domain maps to 335-569; that stretch reads VQFHHVTYKF…GGRFYKLLKA (235 aa). ATP is bound at residue 368 to 375; that stretch reads GPTGAGKT.

It belongs to the ABC transporter superfamily. Beta-(1--&gt;2)glucan exporter (TC 3.A.1.108.1) family. As to quaternary structure, homodimer.

It localises to the cell inner membrane. The enzyme catalyses [(1-&gt;2)-beta-D-glucosyl](n)(in) + ATP + H2O = [(1-&gt;2)-beta-D-glucosyl](n)(out) + ADP + phosphate + H(+). Involved in beta-(1--&gt;2)glucan export. Transmembrane domains (TMD) form a pore in the inner membrane and the ATP-binding domain (NBD) is responsible for energy generation. The sequence is that of Beta-(1--&gt;2)glucan export ATP-binding/permease protein NdvA from Bartonella quintana (strain Toulouse) (Rochalimaea quintana).